The sequence spans 431 residues: Enolase (431 aa).

Glutamine 167 contributes to the (2R)-2-phosphoglycerate binding site. Glutamate 209 acts as the Proton donor in catalysis. Aspartate 246, glutamate 289, and aspartate 316 together coordinate Mg(2+). (2R)-2-phosphoglycerate-binding residues include lysine 341, arginine 370, serine 371, and lysine 392. Lysine 341 serves as the catalytic Proton acceptor.

The protein belongs to the enolase family. Component of the RNA degradosome, a multiprotein complex involved in RNA processing and mRNA degradation. Requires Mg(2+) as cofactor.

Its subcellular location is the cytoplasm. It is found in the secreted. The protein resides in the cell surface. The catalysed reaction is (2R)-2-phosphoglycerate = phosphoenolpyruvate + H2O. It participates in carbohydrate degradation; glycolysis; pyruvate from D-glyceraldehyde 3-phosphate: step 4/5. In terms of biological role, catalyzes the reversible conversion of 2-phosphoglycerate (2-PG) into phosphoenolpyruvate (PEP). It is essential for the degradation of carbohydrates via glycolysis. The sequence is that of Enolase from Shewanella sp. (strain ANA-3).